The sequence spans 286 residues: uncharacterized protein (286 aa).

This sequence belongs to the NmrA-type oxidoreductase family.

This is an uncharacterized protein from Bacillus subtilis (strain 168).